The primary structure comprises 170 residues: CDP-archaeol synthase (170 aa).

The next 5 membrane-spanning stretches (helical) occupy residues 9-29, 53-73, 79-99, 114-134, and 140-160; these read AFWYILPAYFANSSPVVLGGG, GFFGGLIVGTIIGIVQYFLLP, LGIAIELAFLLSLGTLVGDLI, PAVGLDQWGFLIAALCFAYPV, and GEVLFLLVITPLIHWGANIFA.

It belongs to the CDP-archaeol synthase family. Requires Mg(2+) as cofactor.

It localises to the cell membrane. It carries out the reaction 2,3-bis-O-(geranylgeranyl)-sn-glycerol 1-phosphate + CTP + H(+) = CDP-2,3-bis-O-(geranylgeranyl)-sn-glycerol + diphosphate. It participates in membrane lipid metabolism; glycerophospholipid metabolism. Catalyzes the formation of CDP-2,3-bis-(O-geranylgeranyl)-sn-glycerol (CDP-archaeol) from 2,3-bis-(O-geranylgeranyl)-sn-glycerol 1-phosphate (DGGGP) and CTP. This reaction is the third ether-bond-formation step in the biosynthesis of archaeal membrane lipids. The protein is CDP-archaeol synthase of Pyrococcus horikoshii (strain ATCC 700860 / DSM 12428 / JCM 9974 / NBRC 100139 / OT-3).